A 1024-amino-acid polypeptide reads, in one-letter code: Hemolysin, plasmid (1024 aa).

Residues 20-32 (AANKLHSAGQSTK) are compositionally biased toward polar residues. Positions 20-39 (AANKLHSAGQSTKDALKKAA) are disordered. Helical transmembrane passes span 238–260 (IGAGLDTVSGILSAISASFILSN), 268–327 (KAAA…LSIA), and 365–411 (DASL…GILE). 2 N6-myristoyl lysine lipidation sites follow: lysine 564 and lysine 690. Hemolysin-type calcium-binding repeat units lie at residues 732–749 (FGSKFTDIFHGADGDDLI), 750–767 (EGNDGNDRLYGDKGNDTL), 768–785 (SGGNGDDQLYGGDGNDKL), 786–803 (IGVAGNNYLNGGDGDDEF), 816–833 (FGGKGNDKLYGSEGADLL), and 834–851 (DGGEGDDLLKGGYGNDIY).

This sequence belongs to the RTX prokaryotic toxin (TC 1.C.11) family. Post-translationally, myristoylated by HlyC; the toxin only becomes active when modified. Mainly myristoylated, while a minor fraction is acylated with pentadecanoyl (C15:0; 26%) and heptadecanoyl (C17:0; 6%) fatty acyl groups. Fatty acylation is involved in binding to host membranes and promotes the irreversible insertion of Hemolysin into the host cell membrane. Can be activated by both myristoylation and palmitoylation, but HlyC catalyzes lysine myristoylation.

Its subcellular location is the secreted. It is found in the host cell membrane. Its function is as follows. Bacterial hemolysins are exotoxins that attack blood cell membranes and cause cell rupture by forming a pore. This chain is Hemolysin, plasmid, found in Escherichia coli.